We begin with the raw amino-acid sequence, 139 residues long: Putative nickel-responsive regulator (139 aa).

Residues H79, H90, H92, and C98 each coordinate Ni(2+).

The protein belongs to the transcriptional regulatory CopG/NikR family. The cofactor is Ni(2+).

Functionally, transcriptional regulator. The chain is Putative nickel-responsive regulator from Geobacter sulfurreducens (strain ATCC 51573 / DSM 12127 / PCA).